The sequence spans 297 residues: 4-hydroxy-tetrahydrodipicolinate synthase (297 aa).

T50 is a binding site for pyruvate. Residue Y139 is the Proton donor/acceptor of the active site. The active-site Schiff-base intermediate with substrate is the K167. A pyruvate-binding site is contributed by V209.

It belongs to the DapA family. In terms of assembly, homotetramer; dimer of dimers.

The protein localises to the cytoplasm. The enzyme catalyses L-aspartate 4-semialdehyde + pyruvate = (2S,4S)-4-hydroxy-2,3,4,5-tetrahydrodipicolinate + H2O + H(+). It functions in the pathway amino-acid biosynthesis; L-lysine biosynthesis via DAP pathway; (S)-tetrahydrodipicolinate from L-aspartate: step 3/4. Catalyzes the condensation of (S)-aspartate-beta-semialdehyde [(S)-ASA] and pyruvate to 4-hydroxy-tetrahydrodipicolinate (HTPA). This is 4-hydroxy-tetrahydrodipicolinate synthase from Microcystis aeruginosa (strain NIES-843 / IAM M-2473).